The following is a 123-amino-acid chain: uncharacterized protein (123 aa).

Residues 5 to 25 traverse the membrane as a helical segment; it reads GTLVIIFAIVLILCIMLLFFY. A disordered region spans residues 33–54; the sequence is PGVLPPPIPPPTPPPPKKKYDH. A compositionally biased stretch (pro residues) spans 35-47; that stretch reads VLPPPIPPPTPPP.

Belongs to the asfivirus CP123L family.

The protein resides in the host membrane. The protein localises to the virion. This is an uncharacterized protein from African swine fever virus (isolate Warthog/Namibia/Wart80/1980) (ASFV).